Reading from the N-terminus, the 495-residue chain is Ribitol 5-phosphate transferase FKRP (495 aa).

Over 1–6 (MRLTRC) the chain is Cytoplasmic. A helical membrane pass occupies residues 7-29 (QAALAAAITLNLLVLFYVSWLQH). The Lumenal segment spans residues 30 to 495 (QPRNSRARGP…PALLSLTGSG (466 aa)). A disulfide bridge links cysteine 168 with cysteine 191. Residues asparagine 172 and asparagine 209 are each glycosylated (N-linked (GlcNAc...) asparagine). Positions 289, 296, 317, and 318 each coordinate Zn(2+). Positions 289–318 (CNKETTRCFGTVVGDTPAYLYEERWTPPCC) are zinc finger loop. Residues glycine 345, arginine 352, 359-364 (WDYDVD), 437-438 (QD), and 480-482 (NPQ) contribute to the CDP-L-ribitol site. Residues aspartate 360, aspartate 362, and aspartate 364 each contribute to the Mg(2+) site.

It belongs to the LicD transferase family. As to quaternary structure, homodimer; disulfide-linked. Tetramer. Forms a complex composed of FKRP, FKTN/fukutin, and RXYLT1/TMEM5. Also exists as large multimeric protein complexes. May interact with the dystrophin-glycoprotein complex (DGC). It depends on Mg(2+) as a cofactor. N-glycosylated. In terms of tissue distribution, expressed in the retina (at protein level). Expressed predominantly in skeletal muscle, placenta, and heart and relatively weakly in brain, lung, liver, kidney, and pancreas.

The protein localises to the golgi apparatus membrane. It localises to the secreted. Its subcellular location is the cell membrane. It is found in the sarcolemma. The protein resides in the rough endoplasmic reticulum. The protein localises to the cytoplasm. The catalysed reaction is 3-O-[Rib-ol-P-3-beta-D-GalNAc-(1-&gt;3)-beta-D-GlcNAc-(1-&gt;4)-(O-6-P-alpha-D-Man)]-Thr-[protein] + CDP-L-ribitol = 3-O-[Rib-ol-P-Rib-ol-P-3-beta-D-GalNAc-(1-&gt;3)-beta-D-GlcNAc-(1-&gt;4)-(O-6-P-alpha-D-Man)]-Thr-[protein] + CMP + H(+). It functions in the pathway protein modification; protein glycosylation. In terms of biological role, catalyzes the transfer of a ribitol 5-phosphate from CDP-L-ribitol to the ribitol 5-phosphate previously attached by FKTN/fukutin to the phosphorylated O-mannosyl trisaccharide (N-acetylgalactosamine-beta-3-N-acetylglucosamine-beta-4-(phosphate-6-)mannose), a carbohydrate structure present in alpha-dystroglycan (DAG1). This constitutes the second step in the formation of the ribose 5-phosphate tandem repeat which links the phosphorylated O-mannosyl trisaccharide to the ligand binding moiety composed of repeats of 3-xylosyl-alpha-1,3-glucuronic acid-beta-1. The protein is Ribitol 5-phosphate transferase FKRP of Homo sapiens (Human).